Reading from the N-terminus, the 453-residue chain is UDP-glycosyltransferase 74E1 (453 aa).

UDP-alpha-D-glucose-binding positions include Ser-279, 332–334 (SPQ), 349–357 (HCGWNSTLE), and 371–374 (WADQ).

It belongs to the UDP-glycosyltransferase family.

The sequence is that of UDP-glycosyltransferase 74E1 (UGT74E1) from Arabidopsis thaliana (Mouse-ear cress).